The chain runs to 130 residues: Odontogenesis associated phosphoprotein (130 aa).

The first 23 residues, 1–23 (MARRHCFSYWLLVCWLVVTVAEG), serve as a signal peptide directing secretion.

Highly expressed in placenta.

Its subcellular location is the secreted. In terms of biological role, may promote nucleation of hydroxyapatite. The protein is Odontogenesis associated phosphoprotein of Homo sapiens (Human).